The sequence spans 212 residues: Uridine kinase (212 aa).

13–20 (GGSGSGKT) contributes to the ATP binding site.

Belongs to the uridine kinase family.

The protein resides in the cytoplasm. It catalyses the reaction uridine + ATP = UMP + ADP + H(+). The catalysed reaction is cytidine + ATP = CMP + ADP + H(+). The protein operates within pyrimidine metabolism; CTP biosynthesis via salvage pathway; CTP from cytidine: step 1/3. It participates in pyrimidine metabolism; UMP biosynthesis via salvage pathway; UMP from uridine: step 1/1. This chain is Uridine kinase, found in Bacillus anthracis (strain A0248).